We begin with the raw amino-acid sequence, 230 residues long: Inactive L-threonine 3-dehydrogenase, mitochondrial (230 aa).

This sequence belongs to the NAD(P)-dependent epimerase/dehydratase family. Expressed in all tissues examined. Detected in most cell types examined, but not observed in endothelial cells, glioma cell lines and some leukemia cell lines.

The protein localises to the mitochondrion. The polypeptide is Inactive L-threonine 3-dehydrogenase, mitochondrial (Homo sapiens (Human)).